A 121-amino-acid polypeptide reads, in one-letter code: Basic phospholipase A2 3 (121 aa).

Disulfide bonds link Cys-26–Cys-115, Cys-28–Cys-44, Cys-43–Cys-95, Cys-49–Cys-121, Cys-50–Cys-88, Cys-57–Cys-81, and Cys-75–Cys-86. Residues Tyr-27, Gly-29, and Gly-31 each contribute to the Ca(2+) site. His-47 is an active-site residue. Position 48 (Asp-48) interacts with Ca(2+). Asp-89 is a catalytic residue.

Belongs to the phospholipase A2 family. Group II subfamily. D49 sub-subfamily. The cofactor is Ca(2+). In terms of tissue distribution, expressed by the venom gland.

The protein localises to the secreted. It carries out the reaction a 1,2-diacyl-sn-glycero-3-phosphocholine + H2O = a 1-acyl-sn-glycero-3-phosphocholine + a fatty acid + H(+). Its function is as follows. PLA2 catalyzes the calcium-dependent hydrolysis of the 2-acyl groups in 3-sn-phosphoglycerides. This chain is Basic phospholipase A2 3, found in Daboia russelii (Russel's viper).